Consider the following 423-residue polypeptide: Glutamine synthetase, chloroplastic (423 aa).

Residues Met1–Val51 constitute a chloroplast transit peptide. The GS beta-grasp domain occupies Val70–Gly150. The disordered stretch occupies residues Arg89–Pro115. Positions Pro154–Val423 constitute a GS catalytic domain.

The protein belongs to the glutamine synthetase family. Homooctamer.

It localises to the plastid. Its subcellular location is the chloroplast. The catalysed reaction is L-glutamate + NH4(+) + ATP = L-glutamine + ADP + phosphate + H(+). The light-modulated chloroplast enzyme, encoded by a nuclear gene and expressed primarily in leaves, is responsible for the reassimilation of the ammonia generated by photorespiration. This chain is Glutamine synthetase, chloroplastic (GLN2), found in Zea mays (Maize).